A 207-amino-acid chain; its full sequence is dITP/XTP pyrophosphatase (207 aa).

Substrate is bound at residue 11–16 (TGNPGK). Aspartate 72 acts as the Proton acceptor in catalysis. Aspartate 72 provides a ligand contact to Mg(2+). Substrate is bound by residues serine 73, 154 to 157 (FGYD), lysine 177, and 182 to 183 (HR).

The protein belongs to the HAM1 NTPase family. Homodimer. Requires Mg(2+) as cofactor.

It carries out the reaction XTP + H2O = XMP + diphosphate + H(+). It catalyses the reaction dITP + H2O = dIMP + diphosphate + H(+). The catalysed reaction is ITP + H2O = IMP + diphosphate + H(+). Its function is as follows. Pyrophosphatase that catalyzes the hydrolysis of nucleoside triphosphates to their monophosphate derivatives, with a high preference for the non-canonical purine nucleotides XTP (xanthosine triphosphate), dITP (deoxyinosine triphosphate) and ITP. Seems to function as a house-cleaning enzyme that removes non-canonical purine nucleotides from the nucleotide pool, thus preventing their incorporation into DNA/RNA and avoiding chromosomal lesions. This chain is dITP/XTP pyrophosphatase, found in Thermus thermophilus (strain ATCC BAA-163 / DSM 7039 / HB27).